A 115-amino-acid chain; its full sequence is Hydrogenase maturation factor HypA (115 aa).

His-2 is a Ni(2+) binding site. 4 residues coordinate Zn(2+): Cys-73, Cys-76, Cys-89, and Cys-92.

The protein belongs to the HypA/HybF family.

Its function is as follows. Involved in the maturation of [NiFe] hydrogenases. Required for nickel insertion into the metal center of the hydrogenase. This chain is Hydrogenase maturation factor HypA, found in Nitrosospira multiformis (strain ATCC 25196 / NCIMB 11849 / C 71).